Here is a 1018-residue protein sequence, read N- to C-terminus: Cytadherence high molecular weight protein 1 (1018 aa).

2 coiled-coil regions span residues 782 to 815 (NRFLLIKKELQAELTRLIEENEQLKAEFLNAKDL) and 849 to 880 (ELVRNIQKAILENESKIKNIQITLKELKAVYK).

In terms of processing, phosphorylated mainly on serine residues.

The protein resides in the cell projection. It is found in the attachment organelle membrane. In terms of biological role, component of the cytoskeleton-like structure which stabilizes the shape of the wall-less Mycoplasma. This cytoskeleton-like network of accessory proteins containing HMW proteins 1 to 5 allows the proper anchoring of cytadhesin proteins in the mycoplasmal membrane at the attachment organelle. The chain is Cytadherence high molecular weight protein 1 (hmw1) from Mycoplasma pneumoniae (strain ATCC 29342 / M129 / Subtype 1) (Mycoplasmoides pneumoniae).